Here is a 324-residue protein sequence, read N- to C-terminus: Endochitinase A2 (324 aa).

Residues 1 to 20 (MSKLRIPILLVLFIVSCCSA) form the signal peptide. Residues 21-61 (EQCGTQAGGALCPGGLCCSKFGWCGSTSEYCGDGCQSQCSG) form the Chitin-binding type-1 domain. Disulfide bonds link Cys23–Cys38, Cys32–Cys44, Cys37–Cys51, and Cys55–Cys59. The active-site Proton donor is the Glu133. 2 cysteine pairs are disulfide-bonded: Cys151-Cys170 and Cys269-Cys301. Residues 310 to 324 (SLPLSSILLDTVAAA) constitute a propeptide, removed in mature form.

Belongs to the glycosyl hydrolase 19 family. Chitinase class I subfamily.

The enzyme catalyses Random endo-hydrolysis of N-acetyl-beta-D-glucosaminide (1-&gt;4)-beta-linkages in chitin and chitodextrins.. In terms of biological role, defense against chitin-containing fungal pathogens. This is Endochitinase A2 (CHI2) from Pisum sativum (Garden pea).